A 182-amino-acid chain; its full sequence is UPF0149 protein CGSHiGG_07585 (182 aa).

It belongs to the UPF0149 family.

The chain is UPF0149 protein CGSHiGG_07585 from Haemophilus influenzae (strain PittGG).